The chain runs to 443 residues: ATP-dependent protease ATPase subunit HslU (443 aa).

Residues Ile-18, 60–65, Asp-256, Glu-321, and Arg-393 contribute to the ATP site; that span reads GVGKTE.

This sequence belongs to the ClpX chaperone family. HslU subfamily. As to quaternary structure, a double ring-shaped homohexamer of HslV is capped on each side by a ring-shaped HslU homohexamer. The assembly of the HslU/HslV complex is dependent on binding of ATP.

It localises to the cytoplasm. ATPase subunit of a proteasome-like degradation complex; this subunit has chaperone activity. The binding of ATP and its subsequent hydrolysis by HslU are essential for unfolding of protein substrates subsequently hydrolyzed by HslV. HslU recognizes the N-terminal part of its protein substrates and unfolds these before they are guided to HslV for hydrolysis. This chain is ATP-dependent protease ATPase subunit HslU, found in Vibrio parahaemolyticus serotype O3:K6 (strain RIMD 2210633).